We begin with the raw amino-acid sequence, 188 residues long: Phosphoribosylglycinamide formyltransferase (188 aa).

N(1)-(5-phospho-beta-D-ribosyl)glycinamide is bound at residue 12 to 14 (GSN). (6R)-10-formyltetrahydrofolate is bound by residues K66, 91–94 (MRLV), and N108. The active-site Proton donor is H110.

It belongs to the GART family.

It catalyses the reaction N(1)-(5-phospho-beta-D-ribosyl)glycinamide + (6R)-10-formyltetrahydrofolate = N(2)-formyl-N(1)-(5-phospho-beta-D-ribosyl)glycinamide + (6S)-5,6,7,8-tetrahydrofolate + H(+). It functions in the pathway purine metabolism; IMP biosynthesis via de novo pathway; N(2)-formyl-N(1)-(5-phospho-D-ribosyl)glycinamide from N(1)-(5-phospho-D-ribosyl)glycinamide (10-formyl THF route): step 1/1. Functionally, catalyzes the transfer of a formyl group from 10-formyltetrahydrofolate to 5-phospho-ribosyl-glycinamide (GAR), producing 5-phospho-ribosyl-N-formylglycinamide (FGAR) and tetrahydrofolate. The protein is Phosphoribosylglycinamide formyltransferase of Staphylococcus epidermidis (strain ATCC 35984 / DSM 28319 / BCRC 17069 / CCUG 31568 / BM 3577 / RP62A).